We begin with the raw amino-acid sequence, 488 residues long: Cysteine--tRNA ligase (488 aa).

Residue Cys-29 coordinates Zn(2+). The 'HIGH' region signature appears at 31–41; that stretch reads ATVQGMPHVGH. Zn(2+) is bound by residues Cys-227, His-252, and Glu-256. The 'KMSKS' region motif lies at 283-287; sequence KMSKS. Lys-286 serves as a coordination point for ATP.

The protein belongs to the class-I aminoacyl-tRNA synthetase family. In terms of assembly, monomer. Zn(2+) is required as a cofactor.

Its subcellular location is the cytoplasm. The enzyme catalyses tRNA(Cys) + L-cysteine + ATP = L-cysteinyl-tRNA(Cys) + AMP + diphosphate. The protein is Cysteine--tRNA ligase of Pseudarthrobacter chlorophenolicus (strain ATCC 700700 / DSM 12829 / CIP 107037 / JCM 12360 / KCTC 9906 / NCIMB 13794 / A6) (Arthrobacter chlorophenolicus).